We begin with the raw amino-acid sequence, 335 residues long: 2-keto-3-deoxygluconate permease (335 aa).

Helical transmembrane passes span 10–30 (IPGG…TAAP), 42–62 (GIIT…GASI), 77–97 (LVLT…QLLP), 100–120 (GIEV…AMDM), 141–161 (AFVL…LGSA), 163–183 (LASF…IGFA), 200–220 (QTLI…GVIL), 224–244 (LLGI…LIIA), 254–274 (TAGL…VIIA), and 289–309 (ALVA…TAMY).

It belongs to the KdgT transporter family.

Its subcellular location is the cell inner membrane. It carries out the reaction 2-dehydro-3-deoxy-D-gluconate(in) + H(+)(in) = 2-dehydro-3-deoxy-D-gluconate(out) + H(+)(out). Its function is as follows. Catalyzes the proton-dependent uptake of 2-keto-3-deoxygluconate (KDG) into the cell. This is 2-keto-3-deoxygluconate permease from Tolumonas auensis (strain DSM 9187 / NBRC 110442 / TA 4).